Here is a 266-residue protein sequence, read N- to C-terminus: 4-hydroxy-tetrahydrodipicolinate reductase (266 aa).

10 to 15 (GPRGRM) contacts NAD(+). NADP(+) is bound at residue K38. Residues 99–101 (GTT) and 125–128 (APNF) contribute to the NAD(+) site. The Proton donor/acceptor role is filled by H155. H156 is a binding site for (S)-2,3,4,5-tetrahydrodipicolinate. The active-site Proton donor is K159. 165–166 (GT) lines the (S)-2,3,4,5-tetrahydrodipicolinate pocket.

It belongs to the DapB family.

It localises to the cytoplasm. It carries out the reaction (S)-2,3,4,5-tetrahydrodipicolinate + NAD(+) + H2O = (2S,4S)-4-hydroxy-2,3,4,5-tetrahydrodipicolinate + NADH + H(+). It catalyses the reaction (S)-2,3,4,5-tetrahydrodipicolinate + NADP(+) + H2O = (2S,4S)-4-hydroxy-2,3,4,5-tetrahydrodipicolinate + NADPH + H(+). Its pathway is amino-acid biosynthesis; L-lysine biosynthesis via DAP pathway; (S)-tetrahydrodipicolinate from L-aspartate: step 4/4. Catalyzes the conversion of 4-hydroxy-tetrahydrodipicolinate (HTPA) to tetrahydrodipicolinate. The protein is 4-hydroxy-tetrahydrodipicolinate reductase of Bacillus cereus (strain ZK / E33L).